A 158-amino-acid chain; its full sequence is MKLNEIKDNEGSTHSRKRLGRGIGSGSGKTAGRGVKGQKSRSGVAINGFEGGQMPIYRRLPKRGFNNIFASDFVVVSLARIQAAIDAGKLDAKATVDAAALKAAGVIRRAKDGVRVLADGDLKAKITIVVAGASKPAVEKIEKAGGTVTLLSAPAAAE.

Over residues 1–13 (MKLNEIKDNEGST) the composition is skewed to basic and acidic residues. Residues 1 to 44 (MKLNEIKDNEGSTHSRKRLGRGIGSGSGKTAGRGVKGQKSRSGV) form a disordered region. The span at 21–35 (RGIGSGSGKTAGRGV) shows a compositional bias: gly residues.

This sequence belongs to the universal ribosomal protein uL15 family. In terms of assembly, part of the 50S ribosomal subunit.

Its function is as follows. Binds to the 23S rRNA. The sequence is that of Large ribosomal subunit protein uL15 from Rhizobium etli (strain ATCC 51251 / DSM 11541 / JCM 21823 / NBRC 15573 / CFN 42).